The primary structure comprises 517 residues: MRKEEIPDKSRTIPIDPNLPKWVCQNCHHSLTIVGVDSYAGKFFNDPPPSATQGSSIHGANSVLGSTRMDNSFVVLPRHKPPQSQGIPPRPRGASSPQPDATQSGKAMEESFVVVYKSEPVSDSGGSHNLSLEVGQNGPLHSNTSGFNATINVLTRAFDIARTQTQVEQPLCLECMRVLSDKLEKEVEDVTRDVEAYEACVQRLEGETQDVLSEADFLKEKKKIEEEERKLVAAIEETEKQNAEVNHQLKELEFKGNRFNELEDRYWQEFNNFQFQLIAHQEERDAILAKIEVSQAHLELLNKTNVLIDAFPIRNDGEFGTINNFRLGRLPAIKVEWDEINAAWGQACLLLHTMCNYFRPKFQCQVKIQPMGSYPRIVDSNNETYELFGPVNLFWSTRYDKAMTLYLMCLKDFADFANSKDQENNIPPDNCLNLPYKIEKDKVLGYSITQSFNKQESWTKALKYTLCNLKWALYWFVGNTNFQPLSATVSLPSNISAAGSLYAKRGPDSSKPSCKKT.

The disordered stretch occupies residues 76–106 (LPRHKPPQSQGIPPRPRGASSPQPDATQSGK). Over residues 95 to 105 (SSPQPDATQSG) the composition is skewed to polar residues. The stretch at 172–266 (CLECMRVLSD…NRFNELEDRY (95 aa)) forms a coiled coil.

Belongs to the beclin family. In terms of assembly, component of a phosphatidylinositol 3-kinase (PI3K) complex composed of ATG6, SH3P2 and FREE1. Interacts with SINAT1, SINAT2, SINAT5, SINAT6, TRAF1A and TRAF1B. Interacts with TUBB8/TUB8. Component of a complex made of VPS38/USL1 and PI3K main subunits such as VPS15, ATG6/VPS30 and VPS34. Binds directly to VPS38/USL1. In terms of processing, ubiquitinated. The interaction with SINAT1 or SINAT2, and the presence of TRAF1A/MUSE14 and TRAF1B/MUSE13, mediates its proteasome-dependent degradation. Highly expressed in mature pollen grains. Expressed in roots, leaves, stems, flowers and siliques.

Its subcellular location is the cytoplasm. It localises to the cytoskeleton. In terms of biological role, required for normal plant development. Required for pollen germination. Required for autophagic activity. Required to limit the pathogen-associated cell death response. May be involved in vacuolar protein sorting. Binds to microtubules. May facilitate efficient recruitment of other ATG proteins to assemble scaffolds for autophagosome biogenesis. This chain is Beclin-1-like protein, found in Arabidopsis thaliana (Mouse-ear cress).